The sequence spans 122 residues: Large ribosomal subunit protein uL14 (122 aa).

This sequence belongs to the universal ribosomal protein uL14 family. In terms of assembly, part of the 50S ribosomal subunit. Forms a cluster with proteins L3 and L19. In the 70S ribosome, L14 and L19 interact and together make contacts with the 16S rRNA in bridges B5 and B8.

Functionally, binds to 23S rRNA. Forms part of two intersubunit bridges in the 70S ribosome. The chain is Large ribosomal subunit protein uL14 from Chloroflexus aurantiacus (strain ATCC 29366 / DSM 635 / J-10-fl).